A 254-amino-acid polypeptide reads, in one-letter code: Gamma-glutamyl-gamma-aminobutyrate hydrolase (254 aa).

The 235-residue stretch at 16–250 (RNRLKGHATQ…ITACQHHIAE (235 aa)) folds into the Glutamine amidotransferase type-1 domain. Cys-114 acts as the Nucleophile in catalysis. Active-site residues include His-222 and Glu-224.

The protein belongs to the peptidase C26 family.

The enzyme catalyses 4-(gamma-L-glutamylamino)butanoate + H2O = 4-aminobutanoate + L-glutamate. Its pathway is amine and polyamine degradation; putrescine degradation; 4-aminobutanoate from putrescine: step 4/4. Involved in the breakdown of putrescine via hydrolysis of the gamma-glutamyl linkage of gamma-glutamyl-gamma-aminobutyrate. This chain is Gamma-glutamyl-gamma-aminobutyrate hydrolase (puuD), found in Escherichia coli O157:H7.